Consider the following 308-residue polypeptide: Ribosomal protein L11 methyltransferase (308 aa).

Residues Thr-160, Gly-181, Asp-203, and Asn-245 each contribute to the S-adenosyl-L-methionine site.

This sequence belongs to the methyltransferase superfamily. PrmA family.

The protein localises to the cytoplasm. It catalyses the reaction L-lysyl-[protein] + 3 S-adenosyl-L-methionine = N(6),N(6),N(6)-trimethyl-L-lysyl-[protein] + 3 S-adenosyl-L-homocysteine + 3 H(+). Methylates ribosomal protein L11. The protein is Ribosomal protein L11 methyltransferase of Thermoanaerobacter pseudethanolicus (strain ATCC 33223 / 39E) (Clostridium thermohydrosulfuricum).